A 181-amino-acid chain; its full sequence is MTNDRLAQDLKCIVKEWTDARILRENDIFVVGCSTSEVAGQPIGTAGSEEIASTIYQQLQSLQNATGINLAFQCCEHLNRAIVVERTIATTYSLPEVTAIPVREAGGAMAAYAYQHMIDPVVVEKITAEAGMDIGETMIGMHLKHVAVPLKFKQRFINYARVRAARTRPKLVGGSRAYYGK.

This sequence belongs to the UPF0340 family.

This is UPF0340 protein OB2986 from Oceanobacillus iheyensis (strain DSM 14371 / CIP 107618 / JCM 11309 / KCTC 3954 / HTE831).